Here is a 113-residue protein sequence, read N- to C-terminus: Protein Rev (113 aa).

The tract at residues 15 to 23 (LIKFLYQSN) is homomultimerization. Residues 17–45 (KFLYQSNPPPSPEGTRQARRNRRRRWRQR) form a disordered region. The short motif at 31–47 (TRQARRNRRRRWRQRQR) is the Nuclear localization signal and RNA-binding (RRE) element. Residues 33–45 (QARRNRRRRWRQR) are compositionally biased toward basic residues. Positions 70–81 (LQLPPLERLTLD) match the Nuclear export signal and binding to XPO1 motif. A phosphoserine; by host mark is found at serine 89 and serine 96. The tract at residues 89–113 (SGTQGVGSPQILVESPTILESGTKE) is disordered.

This sequence belongs to the HIV-1 REV protein family. As to quaternary structure, homomultimer; when bound to the RRE. Multimeric assembly is essential for activity and may involve XPO1. Binds to human KPNB1, XPO1, TNPO1, RANBP5 and IPO7. Interacts with the viral Integrase. Interacts with human KHDRBS1. Interacts with human NAP1; this interaction decreases Rev multimerization and stimulates its activity. Interacts with human DEAD-box helicases DDX3 and DDX24; these interactions may serve for viral RNA export to the cytoplasm and packaging, respectively. Interacts with human PSIP1; this interaction may inhibit HIV-1 DNA integration by promoting dissociation of the Integrase-LEDGF/p75 complex. In terms of processing, asymmetrically arginine dimethylated at one site by host PRMT6. Methylation impairs the RNA-binding activity and export of viral RNA from the nucleus to the cytoplasm. Post-translationally, phosphorylated by protein kinase CK2. Presence of, and maybe binding to the N-terminus of the regulatory beta subunit of CK2 is necessary for CK2-mediated Rev's phosphorylation.

The protein localises to the host nucleus. The protein resides in the host nucleolus. It is found in the host cytoplasm. Functionally, escorts unspliced or incompletely spliced viral pre-mRNAs (late transcripts) out of the nucleus of infected cells. These pre-mRNAs carry a recognition sequence called Rev responsive element (RRE) located in the env gene, that is not present in fully spliced viral mRNAs (early transcripts). This function is essential since most viral proteins are translated from unspliced or partially spliced pre-mRNAs which cannot exit the nucleus by the pathway used by fully processed cellular mRNAs. Rev itself is translated from a fully spliced mRNA that readily exits the nucleus. Rev's nuclear localization signal (NLS) binds directly to KPNB1/Importin beta-1 without previous binding to KPNA1/Importin alpha-1. KPNB1 binds to the GDP bound form of RAN (Ran-GDP) and targets Rev to the nucleus. In the nucleus, the conversion from Ran-GDP to Ran-GTP dissociates Rev from KPNB1 and allows Rev's binding to the RRE in viral pre-mRNAs. Rev multimerization on the RRE via cooperative assembly exposes its nuclear export signal (NES) to the surface. Rev can then form a complex with XPO1/CRM1 and Ran-GTP, leading to nuclear export of the complex. Conversion from Ran-GTP to Ran-GDP mediates dissociation of the Rev/RRE/XPO1/RAN complex, so that Rev can return to the nucleus for a subsequent round of export. Beside KPNB1, also seems to interact with TNPO1/Transportin-1, RANBP5/IPO5 and IPO7/RANBP7 for nuclear import. The nucleoporin-like HRB/RIP is an essential cofactor that probably indirectly interacts with Rev to release HIV RNAs from the perinuclear region to the cytoplasm. The sequence is that of Protein Rev from Human immunodeficiency virus type 1 group M subtype B (isolate JH32) (HIV-1).